Consider the following 156-residue polypeptide: Small ribosomal subunit protein uS7 (156 aa).

It belongs to the universal ribosomal protein uS7 family. As to quaternary structure, part of the 30S ribosomal subunit. Contacts proteins S9 and S11.

Its function is as follows. One of the primary rRNA binding proteins, it binds directly to 16S rRNA where it nucleates assembly of the head domain of the 30S subunit. Is located at the subunit interface close to the decoding center, probably blocks exit of the E-site tRNA. The protein is Small ribosomal subunit protein uS7 of Synechococcus sp. (strain CC9605).